We begin with the raw amino-acid sequence, 618 residues long: Dihydroxy-acid dehydratase (618 aa).

D81 serves as a coordination point for Mg(2+). A [2Fe-2S] cluster-binding site is contributed by C122. 2 residues coordinate Mg(2+): D123 and K124. An N6-carboxylysine modification is found at K124. C197 contributes to the [2Fe-2S] cluster binding site. Residue E493 participates in Mg(2+) binding. S519 (proton acceptor) is an active-site residue.

The protein belongs to the IlvD/Edd family. In terms of assembly, homodimer. Requires [2Fe-2S] cluster as cofactor. Mg(2+) is required as a cofactor.

It carries out the reaction (2R)-2,3-dihydroxy-3-methylbutanoate = 3-methyl-2-oxobutanoate + H2O. The enzyme catalyses (2R,3R)-2,3-dihydroxy-3-methylpentanoate = (S)-3-methyl-2-oxopentanoate + H2O. It participates in amino-acid biosynthesis; L-isoleucine biosynthesis; L-isoleucine from 2-oxobutanoate: step 3/4. The protein operates within amino-acid biosynthesis; L-valine biosynthesis; L-valine from pyruvate: step 3/4. Its function is as follows. Functions in the biosynthesis of branched-chain amino acids. Catalyzes the dehydration of (2R,3R)-2,3-dihydroxy-3-methylpentanoate (2,3-dihydroxy-3-methylvalerate) into 2-oxo-3-methylpentanoate (2-oxo-3-methylvalerate) and of (2R)-2,3-dihydroxy-3-methylbutanoate (2,3-dihydroxyisovalerate) into 2-oxo-3-methylbutanoate (2-oxoisovalerate), the penultimate precursor to L-isoleucine and L-valine, respectively. The sequence is that of Dihydroxy-acid dehydratase from Bordetella avium (strain 197N).